A 545-amino-acid chain; its full sequence is CTP synthase (545 aa).

The segment at 1–266 is amidoligase domain; the sequence is MTTNYIFVTG…DDYICKRFSL (266 aa). A CTP-binding site is contributed by S14. S14 is a binding site for UTP. ATP contacts are provided by residues 15–20 and D72; that span reads SLGKGI. Residues D72 and E140 each coordinate Mg(2+). CTP-binding positions include 147–149, 187–192, and K223; these read DIE and KTKPTQ. UTP-binding positions include 187–192 and K223; that span reads KTKPTQ. 239–241 is a binding site for ATP; that stretch reads KDV. The 252-residue stretch at 291–542 folds into the Glutamine amidotransferase type-1 domain; it reads NIGMVGKYVE…VKAASEYQKR (252 aa). G352 contributes to the L-glutamine binding site. Catalysis depends on C379, which acts as the Nucleophile; for glutamine hydrolysis. L-glutamine contacts are provided by residues 380 to 383, E403, and R470; that span reads LGMQ. Catalysis depends on residues H515 and E517.

Belongs to the CTP synthase family. As to quaternary structure, homotetramer.

It catalyses the reaction UTP + L-glutamine + ATP + H2O = CTP + L-glutamate + ADP + phosphate + 2 H(+). The enzyme catalyses L-glutamine + H2O = L-glutamate + NH4(+). It carries out the reaction UTP + NH4(+) + ATP = CTP + ADP + phosphate + 2 H(+). The protein operates within pyrimidine metabolism; CTP biosynthesis via de novo pathway; CTP from UDP: step 2/2. With respect to regulation, allosterically activated by GTP, when glutamine is the substrate; GTP has no effect on the reaction when ammonia is the substrate. The allosteric effector GTP functions by stabilizing the protein conformation that binds the tetrahedral intermediate(s) formed during glutamine hydrolysis. Inhibited by the product CTP, via allosteric rather than competitive inhibition. Functionally, catalyzes the ATP-dependent amination of UTP to CTP with either L-glutamine or ammonia as the source of nitrogen. Regulates intracellular CTP levels through interactions with the four ribonucleotide triphosphates. The sequence is that of CTP synthase from Erwinia tasmaniensis (strain DSM 17950 / CFBP 7177 / CIP 109463 / NCPPB 4357 / Et1/99).